Here is a 631-residue protein sequence, read N- to C-terminus: tRNA uridine 5-carboxymethylaminomethyl modification enzyme MnmG (631 aa).

Residue 14 to 19 (GGGHAG) coordinates FAD. 274 to 288 (GPRYCPSIEDKIHRF) contacts NAD(+).

It belongs to the MnmG family. Homodimer. Heterotetramer of two MnmE and two MnmG subunits. FAD is required as a cofactor.

It is found in the cytoplasm. NAD-binding protein involved in the addition of a carboxymethylaminomethyl (cmnm) group at the wobble position (U34) of certain tRNAs, forming tRNA-cmnm(5)s(2)U34. This Pseudomonas paraeruginosa (strain DSM 24068 / PA7) (Pseudomonas aeruginosa (strain PA7)) protein is tRNA uridine 5-carboxymethylaminomethyl modification enzyme MnmG.